A 284-amino-acid polypeptide reads, in one-letter code: 4-diphosphocytidyl-2-C-methyl-D-erythritol kinase (284 aa).

Residue Lys-14 is part of the active site. Position 98–108 (98–108 (PMGGGLGGGSS)) interacts with ATP. Asp-140 is an active-site residue.

It belongs to the GHMP kinase family. IspE subfamily.

It carries out the reaction 4-CDP-2-C-methyl-D-erythritol + ATP = 4-CDP-2-C-methyl-D-erythritol 2-phosphate + ADP + H(+). Its pathway is isoprenoid biosynthesis; isopentenyl diphosphate biosynthesis via DXP pathway; isopentenyl diphosphate from 1-deoxy-D-xylulose 5-phosphate: step 3/6. In terms of biological role, catalyzes the phosphorylation of the position 2 hydroxy group of 4-diphosphocytidyl-2C-methyl-D-erythritol. The polypeptide is 4-diphosphocytidyl-2-C-methyl-D-erythritol kinase (Shewanella oneidensis (strain ATCC 700550 / JCM 31522 / CIP 106686 / LMG 19005 / NCIMB 14063 / MR-1)).